We begin with the raw amino-acid sequence, 327 residues long: MTHTLRVIFAGTPEFAAAALAAIHEAGFPVPLVLTQPDRPAGRGMKLQASAVKRYAVEHGMPVAQPPSLRRAGKFPAEAAEAIELLRATPHDVMVVAAYGLLLPQEVLDIPRAGCINIHASLLPRWRGAAPIHRAIEAGDAETGVTLMQMDVGLDTGAMIDEARIAIAPDDTTATLHDRLAADGARLIVAALERLERDGALPATPQPADGVTYAEKIGKHEAALDWRKAADVLARQVRAFDPFPGGVATLDGAAIKLWAAEPVAARGDAAPGTIVEAAPEGVIVACGAGALRVTQLQKPGGKRLPAREFLAGSPLAAGQRFALPDAA.

Residue 121 to 124 (SLLP) participates in (6S)-5,6,7,8-tetrahydrofolate binding.

The protein belongs to the Fmt family.

The enzyme catalyses L-methionyl-tRNA(fMet) + (6R)-10-formyltetrahydrofolate = N-formyl-L-methionyl-tRNA(fMet) + (6S)-5,6,7,8-tetrahydrofolate + H(+). Attaches a formyl group to the free amino group of methionyl-tRNA(fMet). The formyl group appears to play a dual role in the initiator identity of N-formylmethionyl-tRNA by promoting its recognition by IF2 and preventing the misappropriation of this tRNA by the elongation apparatus. This chain is Methionyl-tRNA formyltransferase, found in Burkholderia vietnamiensis (strain G4 / LMG 22486) (Burkholderia cepacia (strain R1808)).